We begin with the raw amino-acid sequence, 545 residues long: Glucose-6-phosphate isomerase (545 aa).

Glu-351 (proton donor) is an active-site residue. Active-site residues include His-382 and Lys-510.

Belongs to the GPI family.

The protein localises to the cytoplasm. It carries out the reaction alpha-D-glucose 6-phosphate = beta-D-fructose 6-phosphate. Its pathway is carbohydrate biosynthesis; gluconeogenesis. The protein operates within carbohydrate degradation; glycolysis; D-glyceraldehyde 3-phosphate and glycerone phosphate from D-glucose: step 2/4. Functionally, catalyzes the reversible isomerization of glucose-6-phosphate to fructose-6-phosphate. This is Glucose-6-phosphate isomerase from Shewanella sp. (strain ANA-3).